Reading from the N-terminus, the 301-residue chain is 4-hydroxy-tetrahydrodipicolinate synthase (301 aa).

Position 50 (Thr50) interacts with pyruvate. Catalysis depends on Tyr138, which acts as the Proton donor/acceptor. Lys167 (schiff-base intermediate with substrate) is an active-site residue. Residue Ile209 participates in pyruvate binding.

Belongs to the DapA family. Homotetramer; dimer of dimers.

The protein localises to the cytoplasm. The catalysed reaction is L-aspartate 4-semialdehyde + pyruvate = (2S,4S)-4-hydroxy-2,3,4,5-tetrahydrodipicolinate + H2O + H(+). Its pathway is amino-acid biosynthesis; L-lysine biosynthesis via DAP pathway; (S)-tetrahydrodipicolinate from L-aspartate: step 3/4. Catalyzes the condensation of (S)-aspartate-beta-semialdehyde [(S)-ASA] and pyruvate to 4-hydroxy-tetrahydrodipicolinate (HTPA). This Sorangium cellulosum (strain So ce56) (Polyangium cellulosum (strain So ce56)) protein is 4-hydroxy-tetrahydrodipicolinate synthase.